Reading from the N-terminus, the 303-residue chain is Oxygen-dependent coproporphyrinogen-III oxidase (303 aa).

Residue serine 93 coordinates substrate. Histidine 97 and histidine 107 together coordinate a divalent metal cation. Histidine 107 functions as the Proton donor in the catalytic mechanism. 109–111 (NVR) contacts substrate. Positions 146 and 176 each coordinate a divalent metal cation. Residues 241-276 (YVEFNLVYDRGTLFGLQSGGRTESILMSLPPQVRWG) form an important for dimerization region. Residue 259-261 (GGR) participates in substrate binding.

Belongs to the aerobic coproporphyrinogen-III oxidase family. In terms of assembly, homodimer. The cofactor is a divalent metal cation.

It is found in the cytoplasm. It catalyses the reaction coproporphyrinogen III + O2 + 2 H(+) = protoporphyrinogen IX + 2 CO2 + 2 H2O. It participates in porphyrin-containing compound metabolism; protoporphyrin-IX biosynthesis; protoporphyrinogen-IX from coproporphyrinogen-III (O2 route): step 1/1. Involved in the heme biosynthesis. Catalyzes the aerobic oxidative decarboxylation of propionate groups of rings A and B of coproporphyrinogen-III to yield the vinyl groups in protoporphyrinogen-IX. In Pseudomonas putida (strain GB-1), this protein is Oxygen-dependent coproporphyrinogen-III oxidase.